The chain runs to 339 residues: Ornithine carbamoyltransferase (339 aa).

Residues 56–59 (STRT), Arg107, and 134–137 (HPTQ) contribute to the carbamoyl phosphate site. Residues Asn168, Asp232, and 236-237 (SM) each bind L-ornithine. Residues 274–275 (CL) and Arg320 each bind carbamoyl phosphate.

This sequence belongs to the aspartate/ornithine carbamoyltransferase superfamily. OTCase family.

It is found in the cytoplasm. It catalyses the reaction carbamoyl phosphate + L-ornithine = L-citrulline + phosphate + H(+). It functions in the pathway amino-acid biosynthesis; L-arginine biosynthesis; L-arginine from L-ornithine and carbamoyl phosphate: step 1/3. Reversibly catalyzes the transfer of the carbamoyl group from carbamoyl phosphate (CP) to the N(epsilon) atom of ornithine (ORN) to produce L-citrulline. The polypeptide is Ornithine carbamoyltransferase (Buchnera aphidicola subsp. Baizongia pistaciae (strain Bp)).